Reading from the N-terminus, the 257-residue chain is MLNIIGVGLRGTGSITFDEFDALRTSDFVYADMYTSIGQPGLIRKISAMIDRDILPLTRDEIENGSILPQAASKNVSLIVVGDPLMATTHNELRYEAMNQGIGVRIFENASILNAAIGKAGLMVYKVAPPVSLPRISEKFFPLSVIDKIKRNADLGLHTPVLIDLEDQENIPLHDALASLLEMERRREYSGIIREICVLSRISFPDEKILFGRIEDMMQQEVNSPYMMFILSKLDDNERRFLSLFSESVSKVSDARS.

Residues Leu-9, Asp-83, Met-86, 111–112, and Ile-163 contribute to the S-adenosyl-L-methionine site; that span reads SI.

Belongs to the diphthine synthase family. In terms of assembly, homodimer.

The catalysed reaction is 2-[(3S)-amino-3-carboxypropyl]-L-histidyl-[translation elongation factor 2] + 3 S-adenosyl-L-methionine = diphthine-[translation elongation factor 2] + 3 S-adenosyl-L-homocysteine + 3 H(+). It participates in protein modification; peptidyl-diphthamide biosynthesis. In terms of biological role, S-adenosyl-L-methionine-dependent methyltransferase that catalyzes the trimethylation of the amino group of the modified target histidine residue in translation elongation factor 2 (EF-2), to form an intermediate called diphthine. The three successive methylation reactions represent the second step of diphthamide biosynthesis. The polypeptide is Diphthine synthase (Thermoplasma acidophilum (strain ATCC 25905 / DSM 1728 / JCM 9062 / NBRC 15155 / AMRC-C165)).